Here is a 100-residue protein sequence, read N- to C-terminus: Putative membrane protein insertion efficiency factor (100 aa).

Belongs to the UPF0161 family.

Its subcellular location is the cell membrane. In terms of biological role, could be involved in insertion of integral membrane proteins into the membrane. The chain is Putative membrane protein insertion efficiency factor from Enterococcus faecalis (strain ATCC 700802 / V583).